A 168-amino-acid polypeptide reads, in one-letter code: Zinc-finger homeodomain protein 14 (168 aa).

Residues tyrosine 7–isoleucine 51 form a ZF-HD dimerization-type; degenerate zinc finger. Residues alanine 76–methionine 103 adopt a coiled-coil conformation. The tract at residues threonine 82–lysine 112 is disordered. The span at arginine 86–serine 98 shows a compositional bias: acidic residues. Residues glutamine 106–histidine 168 constitute a DNA-binding region (homeobox).

As to quaternary structure, homo- and heterodimer with other ZFHD proteins. Interacts with ZHD11. In terms of tissue distribution, mostly expressed in flowers and stems.

Its subcellular location is the nucleus. In terms of biological role, putative transcription factor. The chain is Zinc-finger homeodomain protein 14 (ZHD14) from Arabidopsis thaliana (Mouse-ear cress).